The chain runs to 114 residues: Dolichyl-diphosphooligosaccharide--protein glycosyltransferase subunit DAD2 (114 aa).

Residues 1–30 lie on the Cytoplasmic side of the membrane; the sequence is MPKAAGDAKLLIQSLNKAYAATPTNLKIID. Residues 31-51 traverse the membrane as a helical segment; that stretch reads LYVVFAVATALVQVVYMGIVG. At 52-54 the chain is on the lumenal side; sequence SFP. The chain crosses the membrane as a helical span at residues 55-75; it reads FNSFLSGVLSSIGTAVLGVCL. At 76–93 the chain is on the cytoplasmic side; that stretch reads RIQVNKDNKEFKDLPPER. A helical membrane pass occupies residues 94 to 114; sequence AFADFVLCNLVLHLVIMNFLG.

It belongs to the DAD/OST2 family. As to quaternary structure, component of the oligosaccharyltransferase (OST) complex.

It is found in the endoplasmic reticulum membrane. It functions in the pathway protein modification; protein glycosylation. Functionally, subunit of the oligosaccharyl transferase (OST) complex that catalyzes the initial transfer of a defined glycan (Glc(3)Man(9)GlcNAc(2) in eukaryotes) from the lipid carrier dolichol-pyrophosphate to an asparagine residue within an Asn-X-Ser/Thr consensus motif in nascent polypeptide chains, the first step in protein N-glycosylation. N-glycosylation occurs cotranslationally and the complex associates with the Sec61 complex at the channel-forming translocon complex that mediates protein translocation across the endoplasmic reticulum (ER). All subunits are required for a maximal enzyme activity. This Hordeum vulgare (Barley) protein is Dolichyl-diphosphooligosaccharide--protein glycosyltransferase subunit DAD2 (DAD2).